A 633-amino-acid chain; its full sequence is FAD-binding monooxygenase andJ (633 aa).

FAD contacts are provided by residues 117-120 (TWYW), 129-130 (DT), and tyrosine 135. 127 to 129 (MCD) is a binding site for NADP(+). Residues 269–275 (TGASAVQ) and 292–293 (RT) contribute to the NADP(+) site.

This sequence belongs to the FAD-binding monooxygenase family. FAD is required as a cofactor.

The protein operates within secondary metabolite biosynthesis; terpenoid biosynthesis. FAD-binding monooxygenase; part of the gene cluster that mediates the biosynthesis of anditomin, a fungal meroterpenoid. The first step of the pathway is the synthesis of 3,5-dimethylorsellinic acid (DMOA) by the polyketide synthase andM. DMOA is then converted to the phthalide compound 5,7-dihydroxy-4,6-dimethylphthalide (DHDMP) by the cytochrome P450 monooxygenase andK, which is further prenylated by the prenyltransferase andD to yield farnesyl-DHDMP. Further epoxidation by the FAD-dependent monooxygenase andE leads to epoxyfarnesyl-DHDMP. The next step involves the terpene cyclase andB that converts epoxyfarnesyl-DHDMP into preandiloid A through opening of the epoxide ring followed by the cyclization of the farnesyl moiety. Preandiloid A is in turn oxidized at the C-3 hydroxyl group to yield preandiloid B by the dehydrogenase andC. The dioxygenase andA is solely responsible for the dehydrogenation of preandiloid B leading to the enone preandiloid C, as well as for the intriguing structural rearrangement to generate the bicyclo[2.2.2]octane core, transforming preandiloid C into andiconin. FAD-binding monooxygenase andJ then produces andilesin D which is reduced by dehydrogenase andI to yield andilesin A. Action of acetyltransferase andG followed by a spontaneous acetate elimination leads then to andilesin B, which is in turn substrate of the short chain dehydrogenase andH to yield andilesin C. Finally, the dioxygenase andF catalyzes the transformation of andilesin C to anditomin. The polypeptide is FAD-binding monooxygenase andJ (Emericella variicolor (Aspergillus stellatus)).